The sequence spans 417 residues: Squalene synthase (417 aa).

Arg52 and Arg77 together coordinate NADP(+). Mg(2+) contacts are provided by Asp80, Glu83, and Asp84. Arg218 contributes to the NADP(+) binding site. Residues 284-304 (SIFNFCAIPQVMAIATLAACY) form a helical membrane-spanning segment. Lys315 and Arg317 together coordinate NADP(+). A helical membrane pass occupies residues 384–404 (PIYLSFVMLLAALSWQYLSTL).

The protein belongs to the phytoene/squalene synthase family. It depends on Mg(2+) as a cofactor.

It is found in the endoplasmic reticulum membrane. The enzyme catalyses 2 (2E,6E)-farnesyl diphosphate + NADPH + H(+) = squalene + 2 diphosphate + NADP(+). It catalyses the reaction 2 (2E,6E)-farnesyl diphosphate + NADH + H(+) = squalene + 2 diphosphate + NAD(+). It carries out the reaction presqualene diphosphate + NADH + H(+) = squalene + diphosphate + NAD(+). The catalysed reaction is presqualene diphosphate + NADPH + H(+) = squalene + diphosphate + NADP(+). The enzyme catalyses 2 (2E,6E)-farnesyl diphosphate = presqualene diphosphate + diphosphate. Its pathway is terpene metabolism; lanosterol biosynthesis; lanosterol from farnesyl diphosphate: step 1/3. Functionally, catalyzes the condensation of 2 farnesyl pyrophosphate (FPP) moieties to form squalene. Proceeds in two distinct steps. In the first half-reaction, two molecules of FPP react to form the stable presqualene diphosphate intermediate (PSQPP), with concomitant release of a proton and a molecule of inorganic diphosphate. In the second half-reaction, PSQPP undergoes heterolysis, isomerization, and reduction with NADPH or NADH to form squalene. It is the first committed enzyme of the sterol biosynthesis pathway. This chain is Squalene synthase (FDFT1), found in Bos taurus (Bovine).